Here is a 619-residue protein sequence, read N- to C-terminus: Probable ATP-dependent RNA helicase DDX59 (619 aa).

Lys-26 participates in a covalent cross-link: Glycyl lysine isopeptide (Lys-Gly) (interchain with G-Cter in SUMO2). The segment at 57-98 (SESCPFPSPGGQLAEVHSVSPEQGAKDSHPSEEPVKSFSKTQ) is disordered. Phosphoserine occurs at positions 64 and 76. A compositionally biased stretch (basic and acidic residues) spans 80 to 91 (GAKDSHPSEEPV). Residues 104–133 (GEPICVVCGRYGEYICDKTDEDVCSLECKA) form an HIT-type zinc finger. The tract at residues 142 to 161 (KEEKSKLSNPQKADSEPESP) is disordered. Residues Ser-156 and Ser-160 each carry the phosphoserine modification. Residues 203 to 231 (IDFEHCSLPEVLNHNLKKSGYEVPTPIQM) carry the Q motif motif. The region spanning 234-405 (IPVGLLGRDI…SQLLHNPVRI (172 aa)) is the Helicase ATP-binding domain. An ATP-binding site is contributed by 247–254 (ADTGSGKT). Residues 353 to 356 (DEAD) carry the DEAD box motif. Residues 416-579 (NVRQIILWVE…ILPPQLLNSP (164 aa)) form the Helicase C-terminal domain.

The protein belongs to the DEAD box helicase family. DDX59 subfamily. Interacts (via HIT-type zinc finger) with the RUVBL1/RUVBL2 complex in the presence of ADP. As to expression, expressed in fibroblasts (at protein level).

The protein resides in the cytoplasm. It is found in the nucleus. The enzyme catalyses ATP + H2O = ADP + phosphate + H(+). This is Probable ATP-dependent RNA helicase DDX59 (DDX59) from Homo sapiens (Human).